The chain runs to 1213 residues: Genetic suppressor element 1 (1213 aa).

The tract at residues 1–154 (MKGMSHEPKS…GSRGSSSGRE (154 aa)) is disordered. Ser-10 is subject to Phosphoserine. A compositionally biased stretch (polar residues) spans 15–33 (MLSTATRTTATVNPLTPSP). Composition is skewed to low complexity over residues 51-63 (SAQA…FAAA) and 76-89 (GSSL…VSSP). Phosphoserine occurs at positions 84 and 95. Over residues 103–114 (VPMGPIIVPPGG) the composition is skewed to low complexity. Arg-305 is subject to Asymmetric dimethylarginine. Positions 319–402 (HSERMSSLSA…REKELLAAKA (84 aa)) form a coiled coil. The disordered stretch occupies residues 326–384 (LSAERLQMDEELRREREREREREREADREREKEREREQREKEREKELEREREKEREREL). Over residues 331–384 (LQMDEELRREREREREREREADREREKEREREQREKEREKELEREREKEREREL) the composition is skewed to basic and acidic residues. Thr-433 is subject to Phosphothreonine. At Lys-496 the chain carries N6-acetyllysine. Disordered regions lie at residues 527–579 (LDLG…QHTV) and 630–719 (SEKA…TARG). Composition is skewed to basic and acidic residues over residues 537–560 (EAEH…REPP) and 630–643 (SEKA…EATP). Pro residues predominate over residues 648-657 (QPPPPPPPPR). The span at 681-700 (STQTILGQQRPSLSQATSFG) shows a compositional bias: polar residues. An N6-acetyllysine modification is found at Lys-739. Phosphoserine occurs at positions 766, 826, 828, and 857. Disordered regions lie at residues 816-858 (RKRR…NNSP), 898-979 (LSAA…EAPG), and 1065-1118 (ELQS…PRRQ). A compositionally biased stretch (polar residues) spans 847-858 (TRYSPDEMNNSP). Position 905 is a phosphothreonine (Thr-905). Ser-907 carries the phosphoserine modification. Residues 1065–1081 (ELQSSSRVPLPQHNGQQ) show a composition bias toward polar residues. The stretch at 1093-1197 (QEADQDSEED…ELDHLRKCLA (105 aa)) forms a coiled coil. Positions 1095-1112 (ADQDSEEDSEEDSEEEAE) are enriched in acidic residues. Ser-1099 is modified (phosphoserine).

May be a component of a BHC histone deacetylase complex that contains HDAC1, HDAC2, HMG20B/BRAF35, KDM1A, RCOR1/CoREST, PHF21A/BHC80, ZMYM2, ZNF217, ZMYM3, GSE1 and GTF2I.

This is Genetic suppressor element 1 (Gse1) from Mus musculus (Mouse).